We begin with the raw amino-acid sequence, 602 residues long: Aspartate--tRNA(Asp/Asn) ligase (602 aa).

An L-aspartate-binding site is contributed by Glu187. The tract at residues 211–214 (QQFK) is aspartate. Residues Arg233 and His461 each coordinate L-aspartate. An ATP-binding site is contributed by 233–235 (RDE). Glu495 lines the ATP pocket. Residue Arg502 participates in L-aspartate binding. Residue 547-550 (GLDR) coordinates ATP.

It belongs to the class-II aminoacyl-tRNA synthetase family. Type 1 subfamily. Homodimer.

It localises to the cytoplasm. The catalysed reaction is tRNA(Asx) + L-aspartate + ATP = L-aspartyl-tRNA(Asx) + AMP + diphosphate. Functionally, aspartyl-tRNA synthetase with relaxed tRNA specificity since it is able to aspartylate not only its cognate tRNA(Asp) but also tRNA(Asn). Reaction proceeds in two steps: L-aspartate is first activated by ATP to form Asp-AMP and then transferred to the acceptor end of tRNA(Asp/Asn). This Chlorobium phaeovibrioides (strain DSM 265 / 1930) (Prosthecochloris vibrioformis (strain DSM 265)) protein is Aspartate--tRNA(Asp/Asn) ligase.